Reading from the N-terminus, the 213-residue chain is Receptor-binding cancer antigen expressed on SiSo cells (213 aa).

Residues methionine 1–phenylalanine 6 lie on the Extracellular side of the membrane. A helical; Signal-anchor for type III membrane protein membrane pass occupies residues arginine 7–cysteine 27. Residues arginine 28–serine 213 lie on the Cytoplasmic side of the membrane. Position 36 is a phosphoserine (serine 36). Threonine 41 is subject to Phosphothreonine. Tyrosine 94 carries the phosphotyrosine modification. The stretch at glutamate 163–lysine 211 forms a coiled coil. The segment covering leucine 178 to asparagine 206 has biased composition (basic and acidic residues). Positions leucine 178–serine 213 are disordered.

In terms of assembly, homodimer. In terms of tissue distribution, widely expressed. Expressed in ovary, testis, prostate, thymus, muscle and heart, but not in small intestine, colon, lymph nodes, or peripherical blood lymphocytes. The protein is not detected in any of the above organs.

It localises to the golgi apparatus membrane. In terms of biological role, may participate in suppression of cell proliferation and induces apoptotic cell death through activation of interleukin-1-beta converting enzyme (ICE)-like proteases. This chain is Receptor-binding cancer antigen expressed on SiSo cells (EBAG9), found in Homo sapiens (Human).